A 143-amino-acid chain; its full sequence is Calcitonin (143 aa).

The first 25 residues, Met-1–Ala-25, serve as a signal peptide directing secretion. A propeptide spanning residues Thr-26–Ala-84 is cleaved from the precursor. Residue Ser-42 is modified to Phosphoserine. A disordered region spans residues Thr-62 to Arg-86. Over residues Leu-65–Ser-78 the composition is skewed to acidic residues. A disulfide bridge links Cys-87 with Cys-93. A disordered region spans residues Gly-112–Asn-143. Residue Pro-118 is modified to Proline amide. Basic and acidic residues predominate over residues Pro-118–Ser-133. Residues Arg-122–Asn-143 constitute a propeptide that is removed on maturation.

It belongs to the calcitonin family.

The protein localises to the secreted. Functionally, calcitonin is a peptide hormone that causes a rapid but short-lived drop in the level of calcium and phosphate in blood by promoting the incorporation of those ions in the bones. Calcitonin function is mediated by the calcitonin receptor/CALCR and the CALCR-RAMP2 (AMYR2) receptor complex. This is Calcitonin (CALCA) from Ovis aries (Sheep).